We begin with the raw amino-acid sequence, 98 residues long: MALTKADLAETLFEKVGLSKRDAKETVEVFFEEIKQALESGEQVKLSGFGNFDLREKSERPGRNPKTGEDIPISARRVVTFKPGQKLKARVENLPVEK.

Positions 53–69 (DLREKSERPGRNPKTGE) are enriched in basic and acidic residues. Residues 53–73 (DLREKSERPGRNPKTGEDIPI) are disordered.

This sequence belongs to the bacterial histone-like protein family. Heterodimer of an alpha and a beta chain.

Its function is as follows. This protein is one of the two subunits of integration host factor, a specific DNA-binding protein that functions in genetic recombination as well as in transcriptional and translational control. The chain is Integration host factor subunit alpha from Aliivibrio fischeri (strain ATCC 700601 / ES114) (Vibrio fischeri).